We begin with the raw amino-acid sequence, 201 residues long: Urease accessory protein UreG (201 aa).

GTP is bound at residue 11–18 (GPVGSGKT).

The protein belongs to the SIMIBI class G3E GTPase family. UreG subfamily. Homodimer. UreD, UreF and UreG form a complex that acts as a GTP-hydrolysis-dependent molecular chaperone, activating the urease apoprotein by helping to assemble the nickel containing metallocenter of UreC. The UreE protein probably delivers the nickel.

It localises to the cytoplasm. Functionally, facilitates the functional incorporation of the urease nickel metallocenter. This process requires GTP hydrolysis, probably effectuated by UreG. This is Urease accessory protein UreG from Synechococcus sp. (strain CC9902).